The primary structure comprises 92 residues: Small ribosomal subunit protein uS19 (92 aa).

Belongs to the universal ribosomal protein uS19 family.

Functionally, protein S19 forms a complex with S13 that binds strongly to the 16S ribosomal RNA. This Xanthobacter autotrophicus (strain ATCC BAA-1158 / Py2) protein is Small ribosomal subunit protein uS19.